A 168-amino-acid chain; its full sequence is Small ribosomal subunit protein uS5 (168 aa).

One can recognise an S5 DRBM domain in the interval 13–76 (LKEQVVDIKR…EDAKKNLIHV (64 aa)).

This sequence belongs to the universal ribosomal protein uS5 family. In terms of assembly, part of the 30S ribosomal subunit. Contacts proteins S4 and S8.

Its function is as follows. With S4 and S12 plays an important role in translational accuracy. Functionally, located at the back of the 30S subunit body where it stabilizes the conformation of the head with respect to the body. This chain is Small ribosomal subunit protein uS5, found in Alkaliphilus oremlandii (strain OhILAs) (Clostridium oremlandii (strain OhILAs)).